A 225-amino-acid chain; its full sequence is Enolase-phosphatase E1 (225 aa).

Belongs to the HAD-like hydrolase superfamily. MasA/MtnC family. In terms of assembly, monomer. Mg(2+) serves as cofactor.

It catalyses the reaction 5-methylsulfanyl-2,3-dioxopentyl phosphate + H2O = 1,2-dihydroxy-5-(methylsulfanyl)pent-1-en-3-one + phosphate. Its pathway is amino-acid biosynthesis; L-methionine biosynthesis via salvage pathway; L-methionine from S-methyl-5-thio-alpha-D-ribose 1-phosphate: step 3/6. The protein operates within amino-acid biosynthesis; L-methionine biosynthesis via salvage pathway; L-methionine from S-methyl-5-thio-alpha-D-ribose 1-phosphate: step 4/6. Bifunctional enzyme that catalyzes the enolization of 2,3-diketo-5-methylthiopentyl-1-phosphate (DK-MTP-1-P) into the intermediate 2-hydroxy-3-keto-5-methylthiopentenyl-1-phosphate (HK-MTPenyl-1-P), which is then dephosphorylated to form the acireductone 1,2-dihydroxy-3-keto-5-methylthiopentene (DHK-MTPene). This Shewanella denitrificans (strain OS217 / ATCC BAA-1090 / DSM 15013) protein is Enolase-phosphatase E1.